The following is a 757-amino-acid chain: Nitrogen fixation protein FixI (757 aa).

Residues 1-121 (MSCCASSAAI…GEEEGDDLLK (121 aa)) lie on the Cytoplasmic side of the membrane. The 71-residue stretch at 37-107 (RQTELSVPNA…AIAERGYQTH (71 aa)) folds into the HMA domain. The a metal cation site is built by Cys48 and Cys51. A helical membrane pass occupies residues 122-143 (QLILAVAVSGFAATNIMLLSVS). Topologically, residues 144–158 (VWSGADAATRDLFHW) are extracellular. A helical membrane pass occupies residues 159–178 (ISALIAGPALIYAGRFFYKS). Residues 179 to 185 (AWNAIRH) are Cytoplasmic-facing. The chain crosses the membrane as a helical span at residues 186 to 206 (GRTNMDVPIALAVSLSYGMSL). Residues 207–218 (HETIGHGEHAWF) lie on the Extracellular side of the membrane. A helical membrane pass occupies residues 219–239 (DASVTLLFFLLIGRTLDHMMR). The Cytoplasmic segment spans residues 240-368 (GRARTAISGL…RARYRRIADR (129 aa)). Residues 369–391 (AARYYSPAVHLLALLTFVGWMLV) traverse the membrane as a helical segment. Residues 392–398 (EGDVRHA) lie on the Extracellular side of the membrane. Residues 399-416 (MLVAVAVLIITCPCALGL) form a helical membrane-spanning segment. Over 417–688 (AVPVVQVVAA…ETSRHAGQLI (272 aa)) the chain is Cytoplasmic. Asp454 functions as the 4-aspartylphosphate intermediate in the catalytic mechanism. Mg(2+)-binding residues include Asp634 and Asp638. The helical transmembrane segment at 689-708 (RQNFALAIGYNVIAVPIAIL) threads the bilayer. Over 709 to 713 (GYATP) the chain is Extracellular. The helical transmembrane segment at 714–732 (LVAAVAMSSSSLVVVFNAL) threads the bilayer. At 733 to 757 (RLKRSLAAGRGATPGTLIHSGAVTS) the chain is on the cytoplasmic side.

The protein belongs to the cation transport ATPase (P-type) (TC 3.A.3) family. Type IB subfamily.

The protein localises to the cell membrane. The enzyme catalyses ATP + H2O = ADP + phosphate + H(+). In terms of biological role, fixI is a pump of a specific cation involved in symbiotic nitrogen fixation. The four proteins FixG, FixH, FixI, and FixS may participate in a membrane-bound complex coupling the FixI cation pump with a redox process catalyzed by FixG. This is Nitrogen fixation protein FixI (fixI) from Rhizobium meliloti (strain 1021) (Ensifer meliloti).